A 220-amino-acid polypeptide reads, in one-letter code: UPF0319 protein YccT (220 aa).

Residues Met-1–Ala-20 form the signal peptide.

It belongs to the UPF0319 family.

In Shigella flexneri serotype 5b (strain 8401), this protein is UPF0319 protein YccT.